Reading from the N-terminus, the 482-residue chain is Glutamate--tRNA ligase 1 (482 aa).

Residues 18–28 carry the 'HIGH' region motif; that stretch reads PSPTGYLHLGG. A 'KMSKS' region motif is present at residues 252 to 256; sequence KLSKR. Lys255 provides a ligand contact to ATP.

Belongs to the class-I aminoacyl-tRNA synthetase family. Glutamate--tRNA ligase type 1 subfamily. Monomer.

The protein resides in the cytoplasm. It catalyses the reaction tRNA(Glu) + L-glutamate + ATP = L-glutamyl-tRNA(Glu) + AMP + diphosphate. Its function is as follows. Catalyzes the attachment of glutamate to tRNA(Glu) in a two-step reaction: glutamate is first activated by ATP to form Glu-AMP and then transferred to the acceptor end of tRNA(Glu). The polypeptide is Glutamate--tRNA ligase 1 (Erythrobacter litoralis (strain HTCC2594)).